Consider the following 786-residue polypeptide: Endonuclease MutS2 (786 aa).

335–342 (GPNTGGKT) is a binding site for ATP. The Smr domain occupies 711-786 (LDLRGERFEN…GLGVTVVELK (76 aa)).

It belongs to the DNA mismatch repair MutS family. MutS2 subfamily. As to quaternary structure, homodimer. Binds to stalled ribosomes, contacting rRNA.

Endonuclease that is involved in the suppression of homologous recombination and thus may have a key role in the control of bacterial genetic diversity. Functionally, acts as a ribosome collision sensor, splitting the ribosome into its 2 subunits. Detects stalled/collided 70S ribosomes which it binds and splits by an ATP-hydrolysis driven conformational change. Acts upstream of the ribosome quality control system (RQC), a ribosome-associated complex that mediates the extraction of incompletely synthesized nascent chains from stalled ribosomes and their subsequent degradation. Probably generates substrates for RQC. The sequence is that of Endonuclease MutS2 from Bacillus cereus (strain ATCC 10987 / NRS 248).